The following is a 275-amino-acid chain: Membrane protein insertase YidC 2 (275 aa).

The first 21 residues, 1 to 21 (MKKKNIILISVLLGALLLLTG), serve as a signal peptide directing secretion. C22 is lipidated: N-palmitoyl cysteine. C22 is lipidated: S-diacylglycerol cysteine. A run of 4 helical transmembrane segments spans residues 48–68 (FVAK…TLLI), 133–153 (QMGC…YYAI), 174–194 (MVLA…SMIG), and 212–232 (IMIL…WAVG).

Belongs to the OXA1/ALB3/YidC family. Type 2 subfamily.

The protein localises to the cell membrane. In terms of biological role, required for the insertion and/or proper folding and/or complex formation of integral membrane proteins into the membrane. Involved in integration of membrane proteins that insert both dependently and independently of the Sec translocase complex, as well as at least some lipoproteins. The polypeptide is Membrane protein insertase YidC 2 (Listeria monocytogenes serotype 4b (strain F2365)).